Here is a 353-residue protein sequence, read N- to C-terminus: Polyprenal reductase 2 (353 aa).

The next 6 helical transmembrane spans lie at 11-31, 78-98, 175-195, 234-254, 291-308, and 313-335; these read PLLCFAWIAATLPIIAAALPI, FMHFYVVGVLATTILLLAIWF, MHIVGYLTGLFYYVAAPLSLA, PLLKLGWTQWIGAVIFIWGSL, YLAELVIYFGMLVASGAE, and WFLFIFLITNLSFAAVETYNWYL.

Belongs to the steroid 5-alpha reductase family. Polyprenal reductase subfamily.

Its subcellular location is the cell membrane. The catalysed reaction is a di-trans,poly-cis-dolichal + NADP(+) = a di-trans,poly-cis-polyprenal + NADPH + H(+). Its pathway is protein modification; protein glycosylation. In terms of biological role, plays a key role in early steps of protein N-linked glycosylation by being involved in the conversion of polyprenol into dolichol. Acts as a polyprenal reductase that mediates the reduction of polyprenal into dolichal in a NADP-dependent mechanism. Dolichols are required for the synthesis of dolichol-linked monosaccharides and the oligosaccharide precursor used for N-glycosylation. This is Polyprenal reductase 2 from Oryza sativa subsp. indica (Rice).